Consider the following 225-residue polypeptide: UPF0758 protein Spea_3837 (225 aa).

The region spanning 102 to 224 (ILSDPDLTRD…IVSFAERGWI (123 aa)) is the MPN domain. Zn(2+) is bound by residues His-173, His-175, and Asp-186. A JAMM motif motif is present at residues 173–186 (HNHPSGIAEPSTAD).

The protein belongs to the UPF0758 family.

This is UPF0758 protein Spea_3837 from Shewanella pealeana (strain ATCC 700345 / ANG-SQ1).